The chain runs to 473 residues: ATP synthase subunit beta (473 aa).

153 to 160 contacts ATP; that stretch reads GGAGVGKT.

Belongs to the ATPase alpha/beta chains family. As to quaternary structure, F-type ATPases have 2 components, CF(1) - the catalytic core - and CF(0) - the membrane proton channel. CF(1) has five subunits: alpha(3), beta(3), gamma(1), delta(1), epsilon(1). CF(0) has three main subunits: a(1), b(2) and c(9-12). The alpha and beta chains form an alternating ring which encloses part of the gamma chain. CF(1) is attached to CF(0) by a central stalk formed by the gamma and epsilon chains, while a peripheral stalk is formed by the delta and b chains.

It localises to the cell inner membrane. It carries out the reaction ATP + H2O + 4 H(+)(in) = ADP + phosphate + 5 H(+)(out). Its function is as follows. Produces ATP from ADP in the presence of a proton gradient across the membrane. The catalytic sites are hosted primarily by the beta subunits. The protein is ATP synthase subunit beta of Rickettsia conorii (strain ATCC VR-613 / Malish 7).